The primary structure comprises 207 residues: Inhibitor of hydrogen peroxide resistance (207 aa).

The H-T-H motif DNA-binding region spans Met-163–Ala-182.

This sequence belongs to the IprA family.

Functionally, involved in oxidative stress resistance. This is Inhibitor of hydrogen peroxide resistance from Salmonella typhimurium (strain LT2 / SGSC1412 / ATCC 700720).